Here is a 202-residue protein sequence, read N- to C-terminus: Holliday junction resolvase RecU (202 aa).

4 residues coordinate Mg(2+): Thr85, Asp87, Glu100, and Gln119.

It belongs to the RecU family. Mg(2+) is required as a cofactor.

It is found in the cytoplasm. The catalysed reaction is Endonucleolytic cleavage at a junction such as a reciprocal single-stranded crossover between two homologous DNA duplexes (Holliday junction).. Endonuclease that resolves Holliday junction intermediates in genetic recombination. Cleaves mobile four-strand junctions by introducing symmetrical nicks in paired strands. Promotes annealing of linear ssDNA with homologous dsDNA. Required for DNA repair, homologous recombination and chromosome segregation. The sequence is that of Holliday junction resolvase RecU from Streptococcus pyogenes serotype M6 (strain ATCC BAA-946 / MGAS10394).